Reading from the N-terminus, the 474-residue chain is Glutamine synthetase (474 aa).

Residues 15–99 enclose the GS beta-grasp domain; the sequence is EDVQFIDVRF…MTFFIHDPIT (85 aa). Residues 107–474 form the GS catalytic domain; sequence PRNIAKKAET…PYEFTLYYDI (368 aa). E132 and E134 together coordinate Mg(2+). E210 lines the ATP pocket. Residues E215 and E223 each contribute to the Mg(2+) site. Residues 267–268 and G268 each bind L-glutamate; that span reads NG. A Mg(2+)-binding site is contributed by H272. ATP contacts are provided by residues 274 to 276 and S276; that span reads HSS. L-glutamate contacts are provided by R325, E331, and R343. The ATP site is built by R343, R348, and K357. E362 lines the Mg(2+) pocket. R364 is a binding site for L-glutamate. Residue Y402 is modified to O-AMP-tyrosine.

It belongs to the glutamine synthetase family. In terms of assembly, oligomer of 12 subunits arranged in the form of two hexagons. Mg(2+) serves as cofactor.

The protein localises to the cytoplasm. The enzyme catalyses L-glutamate + NH4(+) + ATP = L-glutamine + ADP + phosphate + H(+). The activity of this enzyme could be controlled by adenylation under conditions of abundant glutamine. Functionally, catalyzes the ATP-dependent biosynthesis of glutamine from glutamate and ammonia. This Frankia alni protein is Glutamine synthetase.